The sequence spans 280 residues: Ribosomal RNA large subunit methyltransferase J (280 aa).

S-adenosyl-L-methionine is bound by residues His-19, His-42, Ser-100, Glu-118, 143–144, and Asp-164; that span reads DG. Asp-164 acts as the Proton acceptor in catalysis.

It belongs to the RlmJ family. As to quaternary structure, monomer.

It catalyses the reaction adenosine(2030) in 23S rRNA + S-adenosyl-L-methionine = N(6)-methyladenosine(2030) in 23S rRNA + S-adenosyl-L-homocysteine + H(+). Functionally, specifically methylates the adenine in position 2030 of 23S rRNA. Nascent 23S rRNA seems to be the natural substrate. Appears to be not necessary for ribosome assembly. Required for the utilization of extracellular DNA as the sole source of carbon and energy. In Escherichia coli (strain K12), this protein is Ribosomal RNA large subunit methyltransferase J.